The primary structure comprises 163 residues: Large ribosomal subunit protein bL19 (163 aa).

Positions 131-150 (ISQERKASGKDQASKPEVRP) are enriched in basic and acidic residues. The interval 131–163 (ISQERKASGKDQASKPEVRPQGKKPAPKPKAKK) is disordered. Over residues 151-163 (QGKKPAPKPKAKK) the composition is skewed to basic residues.

Belongs to the bacterial ribosomal protein bL19 family.

Its function is as follows. This protein is located at the 30S-50S ribosomal subunit interface and may play a role in the structure and function of the aminoacyl-tRNA binding site. The polypeptide is Large ribosomal subunit protein bL19 (Rhodospirillum rubrum (strain ATCC 11170 / ATH 1.1.1 / DSM 467 / LMG 4362 / NCIMB 8255 / S1)).